Here is a 119-residue protein sequence, read N- to C-terminus: Developmental pluripotency-associated protein 5B/5C (119 aa).

Positions 24–86 (PEVFQVQSLV…SIKVRAKWLL (63 aa)) constitute a KH; atypical domain.

It belongs to the KHDC1 family.

The protein localises to the cytoplasm. Functionally, involved in the maintenance of embryonic stem (ES) cell pluripotency. Dispensable for self-renewal of pluripotent ES cells and establishment of germ cells. Associates with specific target mRNAs. This is Developmental pluripotency-associated protein 5B/5C from Mus musculus (Mouse).